The following is a 381-amino-acid chain: Putative steryl acetyl hydrolase mug81 (381 aa).

Residues 1–9 lie on the Cytoplasmic side of the membrane; sequence MISLSLLYR. The helical; Signal-anchor for type II membrane protein transmembrane segment at 10–30 threads the bilayer; it reads ILTLPIILVGTTILYFTIGTN. Over 31 to 381 the chain is Lumenal; it reads FPHDELRHNL…YTFLRETFEE (351 aa). The Involved in the stabilization of the negatively charged intermediate by the formation of the oxyanion hole signature appears at 125 to 127; the sequence is HGG. N193 is a glycosylation site (N-linked (GlcNAc...) asparagine). S200 is a catalytic residue.

Belongs to the 'GDXG' lipolytic enzyme family.

It is found in the cytoplasm. Its subcellular location is the endoplasmic reticulum membrane. Required for the deacetylation of acetylated sterols. Has a role in meiosis. The chain is Putative steryl acetyl hydrolase mug81 (mug180) from Schizosaccharomyces pombe (strain 972 / ATCC 24843) (Fission yeast).